We begin with the raw amino-acid sequence, 503 residues long: ATP synthase subunit alpha, chloroplastic (503 aa).

An ATP-binding site is contributed by 170–177; it reads GDRQTGKT.

It belongs to the ATPase alpha/beta chains family. As to quaternary structure, F-type ATPases have 2 components, CF(1) - the catalytic core - and CF(0) - the membrane proton channel. CF(1) has five subunits: alpha(3), beta(3), gamma(1), delta(1), epsilon(1). CF(0) has four main subunits: a, b, b' and c.

It localises to the plastid. The protein resides in the chloroplast thylakoid membrane. It carries out the reaction ATP + H2O + 4 H(+)(in) = ADP + phosphate + 5 H(+)(out). In terms of biological role, produces ATP from ADP in the presence of a proton gradient across the membrane. The alpha chain is a regulatory subunit. This chain is ATP synthase subunit alpha, chloroplastic, found in Trieres chinensis (Marine centric diatom).